Consider the following 82-residue polypeptide: Teratocyte protein CftICK-IV (82 aa).

Positions 1-21 are cleaved as a signal peptide; the sequence is MAKILLTFIILTCLIVTITPA.

In terms of processing, contains 4 disulfide bonds. In terms of tissue distribution, abundantly expressed by teratocytes, which are extra-embryonic cells released by parasitoid wasps into their hosts during larval eclosion.

It localises to the secreted. In terms of biological role, this endoparasitoid wasp peptide has immununosuppressive and insecticidal activities. Suppress cellular immunity which is detectable as a reduction of hemocyte spread index in the host. In vivo, ingestion of this peptide moderately reduces leaf consumption of D.saccharalis, a permissive host for the lepidoptere C.flavipes. This is Teratocyte protein CftICK-IV from Cotesia flavipes (Parasitic wasp).